The sequence spans 188 residues: CASP-like protein 4B1 (188 aa).

Residues 1–11 are compositionally biased toward basic and acidic residues; sequence MTNPDKQKPVE. The segment at 1–34 is disordered; that stretch reads MTNPDKQKPVEVTDVETAAEKTSEPTPASGTSTI. The Cytoplasmic portion of the chain corresponds to 1–46; it reads MTNPDKQKPVEVTDVETAAEKTSEPTPASGTSTITQRWKREDLIKK. Residues 24-34 show a composition bias toward polar residues; it reads EPTPASGTSTI. Residues 47 to 67 form a helical membrane-spanning segment; sequence ASPITRGICLLFSLLAFLIMV. The Extracellular segment spans residues 68-84; the sequence is SNKHGYGRNFNEYEEYR. A helical transmembrane segment spans residues 85-105; sequence YVLAISIISTLYTAWQTFAHF. The Cytoplasmic segment spans residues 106-120; the sequence is SKREFFDRRTSTLVD. The helical transmembrane segment at 121 to 141 threads the bilayer; sequence FSGDQIVAYLLISAASSAIPL. Over 142–156 the chain is Extracellular; sequence TNRFREGQDNIFTDS. A helical transmembrane segment spans residues 157–177; it reads AASAISMAIFAFVALALSALF. At 178–188 the chain is on the cytoplasmic side; the sequence is SGYKLSTHSFI.

The protein belongs to the Casparian strip membrane proteins (CASP) family. As to quaternary structure, homodimer and heterodimers.

Its subcellular location is the cell membrane. This is CASP-like protein 4B1 from Arabidopsis lyrata subsp. lyrata (Lyre-leaved rock-cress).